Reading from the N-terminus, the 259-residue chain is Imidazole glycerol phosphate synthase subunit HisF (259 aa).

Active-site residues include aspartate 11 and aspartate 130.

Belongs to the HisA/HisF family. Heterodimer of HisH and HisF.

The protein localises to the cytoplasm. The enzyme catalyses 5-[(5-phospho-1-deoxy-D-ribulos-1-ylimino)methylamino]-1-(5-phospho-beta-D-ribosyl)imidazole-4-carboxamide + L-glutamine = D-erythro-1-(imidazol-4-yl)glycerol 3-phosphate + 5-amino-1-(5-phospho-beta-D-ribosyl)imidazole-4-carboxamide + L-glutamate + H(+). It functions in the pathway amino-acid biosynthesis; L-histidine biosynthesis; L-histidine from 5-phospho-alpha-D-ribose 1-diphosphate: step 5/9. In terms of biological role, IGPS catalyzes the conversion of PRFAR and glutamine to IGP, AICAR and glutamate. The HisF subunit catalyzes the cyclization activity that produces IGP and AICAR from PRFAR using the ammonia provided by the HisH subunit. The chain is Imidazole glycerol phosphate synthase subunit HisF from Desulfosudis oleivorans (strain DSM 6200 / JCM 39069 / Hxd3) (Desulfococcus oleovorans).